The primary structure comprises 134 residues: MENKKTIYFLCTGNSCRSQMAEAWGKQYLGDKWNVYSAGIEAHGVNPNAIKAMNEVNIDITNQTSDMIDINILNNADLVVTLCSHADSVCPSTPPHVNRVHWGFDDPAGKEWSEFQRVRDEIRERIKRFSEIGE.

Residues cysteine 11, cysteine 83, and cysteine 90 each act as nucleophile in the active site. 2 disulfide bridges follow: cysteine 11/cysteine 83 and cysteine 83/cysteine 90.

The protein belongs to the low molecular weight phosphotyrosine protein phosphatase family. Thioredoxin-coupled ArsC subfamily.

It is found in the cytoplasm. It carries out the reaction arsenate + [thioredoxin]-dithiol + H(+) = arsenite + [thioredoxin]-disulfide + H2O. Its function is as follows. Catalyzes the reduction of arsenate [As(V)] to arsenite [As(III)]. The protein is Arsenate reductase of Bacillus cereus (strain 03BB102).